The sequence spans 279 residues: Inhibitor of growth protein 1 (279 aa).

The tract at residues 115-206 (AHQDISDGTG…EASPADLPID (92 aa)) is disordered. Residue Lys-135 forms a Glycyl lysine isopeptide (Lys-Gly) (interchain with G-Cter in SUMO2) linkage. Positions 154–171 (RNNENRENASNNHDHDDI) are enriched in basic and acidic residues. Positions 179-191 (KKAKTSKKKKRSK) are enriched in basic residues. The segment at 210–259 (PTYCLCNQVSYGEMIGCDNDECPIEWFHFSCVGLNHKPKGKWYCPKCRGE) adopts a PHD-type zinc-finger fold. Residues Cys-213, Cys-215, Cys-226, Cys-231, His-237, Cys-240, Cys-253, and Cys-256 each contribute to the Zn(2+) site. Residues 262 to 279 (KTMDKALEKSKKERAYNR) form a PBR region.

The protein belongs to the ING family. Interacts with H3K4me3 and to a lesser extent with H3K4me2. Isoform 2 interacts with RSL1D1. In the adult, widely expressed with highest levels in thymus and testis.

Its subcellular location is the nucleus. Its function is as follows. Isoform 1 inhibits p53-dependent transcriptional activation and may function as an oncoprotein. Isoform 2 acts as a negative growth regulator by cooperating with p53 in transcriptional activation of p53-responsive genes and may act as a tumor suppressor. This chain is Inhibitor of growth protein 1 (Ing1), found in Mus musculus (Mouse).